Here is a 264-residue protein sequence, read N- to C-terminus: Rhodanese-like domain-containing protein 4A, chloroplastic (264 aa).

The N-terminal 60 residues, 1 to 60 (MTSLPIILASSPLRNLTKPCSTSQIPKPIQNSTKQPPIHLLTKTNLSVTISQLIITSPVL), are a transit peptide targeting the chloroplast. A helical transmembrane segment spans residues 95–115 (FFVAGCTFTYLVVYPAVMFYL). A Rhodanese domain is found at 132–232 (NESDSQLLDI…ARGKNGWLAI (101 aa)).

It localises to the plastid. It is found in the chloroplast. Its subcellular location is the membrane. In Arabidopsis thaliana (Mouse-ear cress), this protein is Rhodanese-like domain-containing protein 4A, chloroplastic (STR4A).